Consider the following 93-residue polypeptide: Pyrimidine/purine nucleoside phosphorylase (93 aa).

It belongs to the nucleoside phosphorylase PpnP family.

It carries out the reaction a purine D-ribonucleoside + phosphate = a purine nucleobase + alpha-D-ribose 1-phosphate. The catalysed reaction is adenosine + phosphate = alpha-D-ribose 1-phosphate + adenine. The enzyme catalyses cytidine + phosphate = cytosine + alpha-D-ribose 1-phosphate. It catalyses the reaction guanosine + phosphate = alpha-D-ribose 1-phosphate + guanine. It carries out the reaction inosine + phosphate = alpha-D-ribose 1-phosphate + hypoxanthine. The catalysed reaction is thymidine + phosphate = 2-deoxy-alpha-D-ribose 1-phosphate + thymine. The enzyme catalyses uridine + phosphate = alpha-D-ribose 1-phosphate + uracil. It catalyses the reaction xanthosine + phosphate = alpha-D-ribose 1-phosphate + xanthine. Functionally, catalyzes the phosphorolysis of diverse nucleosides, yielding D-ribose 1-phosphate and the respective free bases. Can use uridine, adenosine, guanosine, cytidine, thymidine, inosine and xanthosine as substrates. Also catalyzes the reverse reactions. This chain is Pyrimidine/purine nucleoside phosphorylase, found in Photobacterium profundum (strain SS9).